Consider the following 750-residue polypeptide: Methylmalonyl-CoA mutase, mitochondrial (750 aa).

Residues 1–32 (MLRVKNQLFLLSPHYLKQVKESSGSRLIRQRF) constitute a mitochondrion transit peptide. Position 50 (Q50) interacts with malonyl-CoA. At K89 the chain carries N6-acetyllysine. Malonyl-CoA is bound by residues 96–99 (YPTM) and 106–110 (TIRQY). N6-acetyllysine is present on K212. Malonyl-CoA is bound by residues 216–218 (TIQ), R228, K255, H265, and 304–306 (RLS). K335 bears the N6-acetyllysine mark. At K343 the chain carries N6-succinyllysine. The residue at position 481 (S481) is a Phosphoserine. Residue K595 is modified to N6-succinyllysine. N6-acetyllysine is present on K602. The B12-binding domain maps to 614–746 (RPRLLVAKMG…DDIEKCLEKK (133 aa)). Adenosylcob(III)alamin is bound at residue H627.

Belongs to the methylmalonyl-CoA mutase family. In terms of assembly, homodimer. Interacts (the apoenzyme form) with MMAA; the interaction is GTP dependent. Adenosylcob(III)alamin is required as a cofactor.

It is found in the mitochondrion matrix. It localises to the mitochondrion. Its subcellular location is the cytoplasm. The enzyme catalyses (R)-methylmalonyl-CoA = succinyl-CoA. With respect to regulation, inhibited by itaconyl-CoA, a metabolite that inactivates the coenzyme B12 cofactor. Functionally, catalyzes the reversible isomerization of methylmalonyl-CoA (MMCoA) (generated from branched-chain amino acid metabolism and degradation of dietary odd chain fatty acids and cholesterol) to succinyl-CoA (3-carboxypropionyl-CoA), a key intermediate of the tricarboxylic acid cycle. This chain is Methylmalonyl-CoA mutase, mitochondrial (MMUT), found in Macaca fascicularis (Crab-eating macaque).